We begin with the raw amino-acid sequence, 313 residues long: Porphobilinogen deaminase (313 aa).

Position 242 is an S-(dipyrrolylmethanemethyl)cysteine (Cys242).

Belongs to the HMBS family. In terms of assembly, monomer. The cofactor is dipyrromethane.

The enzyme catalyses 4 porphobilinogen + H2O = hydroxymethylbilane + 4 NH4(+). The protein operates within porphyrin-containing compound metabolism; protoporphyrin-IX biosynthesis; coproporphyrinogen-III from 5-aminolevulinate: step 2/4. Tetrapolymerization of the monopyrrole PBG into the hydroxymethylbilane pre-uroporphyrinogen in several discrete steps. This chain is Porphobilinogen deaminase, found in Escherichia coli O17:K52:H18 (strain UMN026 / ExPEC).